A 282-amino-acid chain; its full sequence is Para-Rep C2 (282 aa).

The region spanning 1–99 (MASKRWCFTL…ETLIAEIGAP (99 aa)) is the CRESS-DNA virus Rep endonuclease domain. The RCR-1 signature appears at 7 to 10 (CFTL). The a divalent metal cation site is built by E38 and H47. The short motif at 47 to 49 (HLQ) is the RCR-2 element. Residues 56-77 (KLIRLGGLKKKFGSIAHWEIAK) carry the Nuclear localization signal motif. The active-site For DNA cleavage activity is Y86. Residues 86–89 (YCTK) carry the RCR-3 motif. The short motif at 99-105 (PVKKGSN) is the Nuclear localization signal element. Residue 174-182 (GPDGGEGKS) coordinates ATP.

Belongs to the nanoviridea/circoviridae replication-associated protein family. As to quaternary structure, homooligomer (Potential). Rep binds to repeated DNA motifs (iterons). Mg(2+) is required as a cofactor. Mn(2+) serves as cofactor.

The protein resides in the host nucleus. The catalysed reaction is ATP + H2O = ADP + phosphate + H(+). Initiates and terminates the replication only of its own subviral DNA molecule. The closed circular ssDNA genome is first converted to a superhelical dsDNA. Rep binds a specific hairpin at the genome origin of replication. Introduces an endonucleolytic nick within the intergenic region of the genome, thereby initiating the rolling circle replication (RCR). Following cleavage, binds covalently to the 5'-phosphate of DNA as a tyrosyl ester. The cleavage gives rise to a free 3'-OH that serves as a primer for the cellular DNA polymerase. The polymerase synthesizes the (+) strand DNA by rolling circle mechanism. After one round of replication, a Rep-catalyzed nucleotidyl transfer reaction releases a circular single-stranded virus genome, thereby terminating the replication. Displays origin-specific DNA cleavage, nucleotidyl transferase, ATPase and helicase activities. This chain is Para-Rep C2 (C2), found in Milk vetch dwarf C2 alphasatellite (MVDC2A).